We begin with the raw amino-acid sequence, 206 residues long: LexA repressor (206 aa).

A DNA-binding region (H-T-H motif) is located at residues 28 to 48 (RAEIARELGFRSANAAEEHLK). Residues serine 123 and lysine 160 each act as for autocatalytic cleavage activity in the active site.

It belongs to the peptidase S24 family. In terms of assembly, homodimer.

It catalyses the reaction Hydrolysis of Ala-|-Gly bond in repressor LexA.. Its function is as follows. Represses a number of genes involved in the response to DNA damage (SOS response), including recA and lexA. In the presence of single-stranded DNA, RecA interacts with LexA causing an autocatalytic cleavage which disrupts the DNA-binding part of LexA, leading to derepression of the SOS regulon and eventually DNA repair. This is LexA repressor from Vibrio campbellii (strain ATCC BAA-1116).